The chain runs to 190 residues: Shikimate kinase (190 aa).

Glycine 22–threonine 27 provides a ligand contact to ATP. A Mg(2+)-binding site is contributed by serine 26. Residues aspartate 44, arginine 68, and glycine 90 each contribute to the substrate site. Arginine 127 serves as a coordination point for ATP. A substrate-binding site is contributed by arginine 146.

It belongs to the shikimate kinase family. In terms of assembly, monomer. Mg(2+) serves as cofactor.

The protein localises to the cytoplasm. The catalysed reaction is shikimate + ATP = 3-phosphoshikimate + ADP + H(+). The protein operates within metabolic intermediate biosynthesis; chorismate biosynthesis; chorismate from D-erythrose 4-phosphate and phosphoenolpyruvate: step 5/7. In terms of biological role, catalyzes the specific phosphorylation of the 3-hydroxyl group of shikimic acid using ATP as a cosubstrate. The protein is Shikimate kinase of Microcystis aeruginosa (strain NIES-843 / IAM M-2473).